Reading from the N-terminus, the 508-residue chain is Photosystem II CP47 reaction center protein (508 aa).

Transmembrane regions (helical) follow at residues 21 to 36 (SVHI…WAGS), 101 to 115 (IVFS…IWHW), 140 to 156 (GIHL…FGAF), 203 to 218 (IAAG…FHLS), 237 to 252 (VLSS…AFVV), and 457 to 472 (SFAL…HGAR).

The protein belongs to the PsbB/PsbC family. PsbB subfamily. As to quaternary structure, PSII is composed of 1 copy each of membrane proteins PsbA, PsbB, PsbC, PsbD, PsbE, PsbF, PsbH, PsbI, PsbJ, PsbK, PsbL, PsbM, PsbT, PsbX, PsbY, PsbZ, Psb30/Ycf12, at least 3 peripheral proteins of the oxygen-evolving complex and a large number of cofactors. It forms dimeric complexes. The cofactor is Binds multiple chlorophylls. PSII binds additional chlorophylls, carotenoids and specific lipids..

It is found in the plastid. The protein resides in the chloroplast thylakoid membrane. Functionally, one of the components of the core complex of photosystem II (PSII). It binds chlorophyll and helps catalyze the primary light-induced photochemical processes of PSII. PSII is a light-driven water:plastoquinone oxidoreductase, using light energy to abstract electrons from H(2)O, generating O(2) and a proton gradient subsequently used for ATP formation. The polypeptide is Photosystem II CP47 reaction center protein (Nasturtium officinale (Watercress)).